A 366-amino-acid polypeptide reads, in one-letter code: Probable UDP-arabinopyranose mutase 2 (366 aa).

The DXD motif signature appears at 104–106; sequence DDD. A glycan (N-linked (Glc...) arginine) is linked at R152.

This sequence belongs to the RGP family. As to quaternary structure, homopentamer or homohexamer. Mn(2+) is required as a cofactor. Requires Mg(2+) as cofactor. Post-translationally, reversibly glycosylated by UDP-glucose, UDP-xylose and UDP-galactose, but not UDP-mannose. In terms of tissue distribution, expressed in all tissues tested, including root, tuber, leaf, petiole, shoot, stolon and stem.

It localises to the secreted. The protein localises to the cell wall. It is found in the cell junction. Its subcellular location is the plasmodesma. The protein resides in the golgi apparatus. It carries out the reaction UDP-beta-L-arabinofuranose = UDP-beta-L-arabinopyranose. In terms of biological role, probable UDP-L-arabinose mutase involved in the biosynthesis of cell wall non-cellulosic polysaccharides. Was initially shown to possess an autoglycosylating activity which is dependent on the presence of UDP-glucose and manganese. This Solanum tuberosum (Potato) protein is Probable UDP-arabinopyranose mutase 2.